The primary structure comprises 94 residues: MTINYQFGDVDAHGAMIRAQAGLLEAEHQAIVRDVLAAGDFWGGAGSAACQGFITQLGRNFQVIYEQANAHGQKVQAAGNNMAQTDSAVGSSWA.

This sequence belongs to the WXG100 family. ESAT-6 subfamily. Strongly interacts with EsxK to form a heterodimeric complex under reducing conditions.

The protein localises to the secreted. The sequence is that of ESAT-6-like protein EsxL from Mycobacterium tuberculosis (strain CDC 1551 / Oshkosh).